Here is a 217-residue protein sequence, read N- to C-terminus: MTLVIKLSGRVFEDEELIFKYARVIKAYSGKVGVVTGGGEIARRYISIAKRGGASYTFQDLLGIYASRLNALLFISLLEDACPIVPTNIEEFLDAWRRCRITVTGGFQPGQSTATVAALVAEAVKAPVLLNAANIDAVYSEDPKINPNAKRLPVLTYDEFERILKSSVLPGGYELMDTWSISILKRNCITTYIFDGRKPEHIEAVMRGENPGSKITC.

6–10 (KLSGR) is an ATP binding site. G38 is a binding site for UMP. Residues G39 and R43 each contribute to the ATP site. UMP is bound by residues D60 and 107-113 (FQPGQST). Residues N134, Y139, and D142 each coordinate ATP.

It belongs to the UMP kinase family. In terms of assembly, homohexamer.

It is found in the cytoplasm. The catalysed reaction is UMP + ATP = UDP + ADP. It functions in the pathway pyrimidine metabolism; CTP biosynthesis via de novo pathway; UDP from UMP (UMPK route): step 1/1. Inhibited by UTP. Functionally, catalyzes the reversible phosphorylation of UMP to UDP. This is Uridylate kinase from Pyrobaculum islandicum (strain DSM 4184 / JCM 9189 / GEO3).